Consider the following 5218-residue polypeptide: HC-toxin synthetase (5218 aa).

The segment at 223–620 (SARAHEQDAN…VGRSDTQIKL (398 aa)) is adenylation 1. The Carrier 1 domain occupies 769–843 (MNDDSLLLTA…TAASCIKSAQ (75 aa)). O-(pantetheine 4'-phosphoryl)serine is present on serine 803. The condensation 1 stretch occupies residues 858 to 1154 (IPVSPIQKLF…GWFTTISPVY (297 aa)). The segment at 1338 to 1806 (EGVYPGSPMQ…LPIVSEHDTA (469 aa)) is epimerization. An adenylation 2 region spans residues 1828–2233 (SRKVVEHPQR…IGRKDTQVKM (406 aa)). Residues 2379 to 2453 (ETTDTVEDRL…DMAKLFSHGQ (75 aa)) enclose the Carrier 2 domain. Position 2414 is an O-(pantetheine 4'-phosphoryl)serine (serine 2414). The tract at residues 2531 to 2929 (EDVFPCTPMQ…MEQFGHNLQT (399 aa)) is condensation 2. The segment at 2979–3386 (LEETAQSQPA…GRKDGQIKLR (408 aa)) is adenylation 3. One can recognise a Carrier 3 domain in the interval 3532-3608 (QVLTTNESVL…DMAGQISFVQ (77 aa)). Residue serine 3569 is modified to O-(pantetheine 4'-phosphoryl)serine. The tract at residues 3649-4102 (EDVYPCTPLQ…PALSEAHLAE (454 aa)) is condensation 3. Positions 4134–4530 (RRAQQSPNSQ…NLYYVRRKDS (397 aa)) are adenylation 4. Residues 4666–4740 (THTQKLLRQL…AMSSLIDEHN (75 aa)) enclose the Carrier 4 domain. O-(pantetheine 4'-phosphoryl)serine is present on serine 4701. Positions 4785 to 5101 (TLPCTEYQQM…SAIREFIPQA (317 aa)) are condensation 4.

It belongs to the NRP synthetase family. Pantetheine 4'-phosphate is required as a cofactor.

It functions in the pathway mycotoxin biosynthesis; HC-toxin biosynthesis. Functionally, non-ribosomal peptide synthetase, part of the diffuse TOX2 gene cluster that mediates the biosynthesis of the HC-toxin, cyclic tetrapeptide of structure cyclo(D-Pro-L-Ala-D-Ala-L-Aeo), where Aeo stands for 2-amino-9,10-epoxi-8-oxodecanoic acid. HC-toxin is a determinant of specificity and virulence in the interaction between the producing fungus and its host, maize. HTS1, contains four modules, one for each amino acid in HC-toxin, with the order of activation being most likely Pro, Ala, Ala, and Aeo. In addition, HTS1 has one epimerase domain between modules 1 and 2, which is responsible for epimerizing L-Pro to D-Pro. The absence of an epimerizing domain after module 3, for producing D-Ala, can be explained by the presence in the cluster of TOXG, an Ala racemase, which produces D-Ala for incorporation by HTS1 into HC-toxin. The chain is HC-toxin synthetase from Cochliobolus carbonum (Maize leaf spot fungus).